The primary structure comprises 395 residues: Ankyrin repeat domain-containing protein 65 (395 aa).

ANK repeat units lie at residues 52 to 81 (QAWG…SVEE), 85 to 114 (AGRT…QVGA), 118 to 147 (AGRT…PANA), 151 to 180 (AGLT…PGPT), 185 to 212 (RGWT…GGAR), 213 to 241 (LDSV…PVDA), 245 to 274 (VGAT…DPSL), 278 to 307 (HGRS…EVDS), 311 to 340 (LGLT…EINA), and 344 to 373 (LHKT…SPTL).

In Bos taurus (Bovine), this protein is Ankyrin repeat domain-containing protein 65 (ANKRD65).